Consider the following 784-residue polypeptide: MVRSISSVLAKEESENGSPIPALEEGSVYHVSLKSEGVSPFSDRIQLNYLYDGKTFSDPSNLNIHQQEACLINELLNAFMGMEGVFVHLQDMKASSEFETIIMPPSFYILPGFDLGIKDIASEMLEMGSHYLSITAFIESRSHFEYGFVNHALCAALRKFVMDYVVLIMQCENQSRIDPNFSLQTLRLYTLPTSRSLRQVYLILRDLLLSMEKNASSSDDLGLSNIDDLLEQLNEGNDISHVVNATRSKKKVCKGGQVISFLTESLTKYAGDPVARKILTYLLREASRPYTKMLNEWIHLGLVNDPYDEFMIKIHKGITSMQLDEDYTDEYWEKRYVIREDQVPPQLLDLQNKVLFAGKYLNVVLECRKGVNNLASLNAKDDTQNQLLWPSTFDDDNFTLNIMNAYVYANESLLQLLQSSQSLYAHLYSLKHYFFLDQSDFFTTFLDNAQHELRKPAKYISITKLQSQLDLALRQPGTITATDPHKEYVTVEVNQTSLIDWLMHIVSISGLEEGTSSQGNEVWNESITKQADVGNETRNFESEHNRSTQGTSKVGSDKDINGFETMQLCYKVPFPLSLILSRKAIIRYQLLFRYFLLLRHVEMQLENSWVQHSKNSAWRLNSSNAKIEQWKRNSWLLRTRMLSFVQKIIYYTTSEVIETHWGKFMGELENARTVDNLMQEHIDFLDTCLKECMLTNSRLLKVQSKLLNTCAMFASYTSTFTRSLYLLENSEESFDEGRMDKMEEILRRYEDSFSRHLKSLVNACNYFASTETAALLSLVMKLTG.

This sequence belongs to the TUBGCP family. Part of the gamma-tubulin complex. Interacts with mcp6. Interacts with mto1. Interacts with mto2.

The protein localises to the cytoplasm. It is found in the cytoskeleton. The protein resides in the microtubule organizing center. It localises to the spindle pole body. In terms of biological role, component of the gamma tubule complex that is required for the regulation of both interphase microtubules and mitotic bipolar spindles. The chain is Spindle pole body component alp4 (alp4) from Schizosaccharomyces pombe (strain 972 / ATCC 24843) (Fission yeast).